A 344-amino-acid polypeptide reads, in one-letter code: Holliday junction branch migration complex subunit RuvB (344 aa).

The segment at 4–184 is large ATPase domain (RuvB-L); sequence QDRIIDANAK…FGIVQRLEFY (181 aa). Residues arginine 24, glycine 65, lysine 68, threonine 69, threonine 70, 131 to 133, arginine 174, tyrosine 184, and arginine 221 each bind ATP; that span reads EDF. Residue threonine 69 participates in Mg(2+) binding. Residues 185–255 form a small ATPAse domain (RuvB-S) region; it reads NIEDLTHIVE…IADLALNMLN (71 aa). The interval 258 to 344 is head domain (RuvB-H); it reads EHGFDHMDRR…ALKQDSLPGI (87 aa). Residues arginine 294, arginine 313, and arginine 318 each contribute to the DNA site.

Belongs to the RuvB family. Homohexamer. Forms an RuvA(8)-RuvB(12)-Holliday junction (HJ) complex. HJ DNA is sandwiched between 2 RuvA tetramers; dsDNA enters through RuvA and exits via RuvB. An RuvB hexamer assembles on each DNA strand where it exits the tetramer. Each RuvB hexamer is contacted by two RuvA subunits (via domain III) on 2 adjacent RuvB subunits; this complex drives branch migration. In the full resolvosome a probable DNA-RuvA(4)-RuvB(12)-RuvC(2) complex forms which resolves the HJ.

It localises to the cytoplasm. The catalysed reaction is ATP + H2O = ADP + phosphate + H(+). Its function is as follows. The RuvA-RuvB-RuvC complex processes Holliday junction (HJ) DNA during genetic recombination and DNA repair, while the RuvA-RuvB complex plays an important role in the rescue of blocked DNA replication forks via replication fork reversal (RFR). RuvA specifically binds to HJ cruciform DNA, conferring on it an open structure. The RuvB hexamer acts as an ATP-dependent pump, pulling dsDNA into and through the RuvAB complex. RuvB forms 2 homohexamers on either side of HJ DNA bound by 1 or 2 RuvA tetramers; 4 subunits per hexamer contact DNA at a time. Coordinated motions by a converter formed by DNA-disengaged RuvB subunits stimulates ATP hydrolysis and nucleotide exchange. Immobilization of the converter enables RuvB to convert the ATP-contained energy into a lever motion, pulling 2 nucleotides of DNA out of the RuvA tetramer per ATP hydrolyzed, thus driving DNA branch migration. The RuvB motors rotate together with the DNA substrate, which together with the progressing nucleotide cycle form the mechanistic basis for DNA recombination by continuous HJ branch migration. Branch migration allows RuvC to scan DNA until it finds its consensus sequence, where it cleaves and resolves cruciform DNA. This is Holliday junction branch migration complex subunit RuvB from Saccharophagus degradans (strain 2-40 / ATCC 43961 / DSM 17024).